We begin with the raw amino-acid sequence, 230 residues long: Large ribosomal subunit protein uL1 (230 aa).

It belongs to the universal ribosomal protein uL1 family. As to quaternary structure, part of the 50S ribosomal subunit.

In terms of biological role, binds directly to 23S rRNA. The L1 stalk is quite mobile in the ribosome, and is involved in E site tRNA release. Protein L1 is also a translational repressor protein, it controls the translation of the L11 operon by binding to its mRNA. The polypeptide is Large ribosomal subunit protein uL1 (Leuconostoc mesenteroides subsp. mesenteroides (strain ATCC 8293 / DSM 20343 / BCRC 11652 / CCM 1803 / JCM 6124 / NCDO 523 / NBRC 100496 / NCIMB 8023 / NCTC 12954 / NRRL B-1118 / 37Y)).